A 908-amino-acid chain; its full sequence is Autophagy-related protein 9 (908 aa).

At 1–216 (MADGVIARLM…SGMWCIVVER (216 aa)) the chain is on the cytoplasmic side. The disordered stretch occupies residues 64 to 162 (SRATVDGRIP…IDQELQPPLH (99 aa)). A helical transmembrane segment spans residues 217 to 237 (VLHLIKVAFVAFLLTFLSQCV). The Lumenal segment spans residues 238–259 (DFKKIPSNQKLSQVLVPQCTRN). N259 is a glycosylation site (N-linked (GlcNAc...) asparagine). The helical transmembrane segment at 260–280 (MSGLWNIGLWLFAFYFMWKSI) threads the bilayer. The Cytoplasmic portion of the chain corresponds to 281 to 433 (QYILDLRRLT…GILSAKLRSR (153 aa)). Residues 434–454 (FIFAGVMILILSPFVAGYLII) lie within the membrane without spanning it. The Cytoplasmic segment spans residues 455–525 (VYFLEYYNEI…KTSMVAKTVS (71 aa)). The helical transmembrane segment at 526–546 (FIAGSIATVLALISVFDPEMF) threads the bilayer. Over 547–555 (LGFEITHDR) the chain is Lumenal. The helical transmembrane segment at 556 to 576 (TVLFYTAVFGAIWSVARGSVS) threads the bilayer. Residues 577–622 (EDNAVFDPEYALGNVVEYTHYQPEHWKDRWHSADVKAEFEELYKLK) are Cytoplasmic-facing. An intramembrane segment occupies 623–643 (LVIFIEEILSILTTPFVLFFS). Topologically, residues 644-908 (LPKSADQIID…HLNRRLGGVR (265 aa)) are cytoplasmic. 2 disordered regions span residues 751 to 779 (AASR…AVMA) and 809 to 878 (QFRG…DSVV). Over residues 813–825 (GNQGDGHMMGGGS) the composition is skewed to gly residues. Positions 839 to 852 (QTHDDESEDSRAGL) are enriched in basic and acidic residues.

It belongs to the ATG9 family. In terms of assembly, homotrimer; forms a homotrimer with a central pore that forms a path between the two membrane leaflets. In terms of processing, phosphorylated by apg-1. Apg-1 phosphorylation is required for preautophagosome elongation.

The protein resides in the preautophagosomal structure membrane. Its subcellular location is the cytoplasmic vesicle membrane. It is found in the golgi apparatus membrane. The protein localises to the endoplasmic reticulum membrane. It carries out the reaction a 1,2-diacyl-sn-glycero-3-phosphocholine(in) = a 1,2-diacyl-sn-glycero-3-phosphocholine(out). The enzyme catalyses a 1,2-diacyl-sn-glycero-3-phospho-L-serine(in) = a 1,2-diacyl-sn-glycero-3-phospho-L-serine(out). It catalyses the reaction a 1,2-diacyl-sn-glycero-3-phosphoethanolamine(in) = a 1,2-diacyl-sn-glycero-3-phosphoethanolamine(out). The catalysed reaction is a 1,2-diacyl-sn-glycero-3-phospho-(1D-myo-inositol-3-phosphate)(in) = a 1,2-diacyl-sn-glycero-3-phospho-(1D-myo-inositol-3-phosphate)(out). Functionally, phospholipid scramblase involved in autophagy and cytoplasm to vacuole transport (Cvt) vesicle formation. Cycles between the preautophagosomal structure/phagophore assembly site (PAS) and the cytoplasmic vesicle pool and supplies membrane for the growing autophagosome. Lipid scramblase activity plays a key role in preautophagosomal structure/phagophore assembly by distributing the phospholipids that arrive through atg-2 from the cytoplasmic to the luminal leaflet of the bilayer, thereby driving autophagosomal membrane expansion. Required for mitophagy. Also involved in endoplasmic reticulum-specific autophagic process and is essential for the survival of cells subjected to severe ER stress. Different machineries are required for anterograde trafficking to the PAS during either the Cvt pathway or bulk autophagy and for retrograde trafficking. The chain is Autophagy-related protein 9 (apg-7) from Neurospora crassa (strain ATCC 24698 / 74-OR23-1A / CBS 708.71 / DSM 1257 / FGSC 987).